A 119-amino-acid polypeptide reads, in one-letter code: Basic phospholipase A2 DE-1 (119 aa).

Disulfide bonds link Cys-11–Cys-71, Cys-26–Cys-118, Cys-28–Cys-44, Cys-43–Cys-99, Cys-50–Cys-92, Cys-60–Cys-85, and Cys-78–Cys-90. Ca(2+) contacts are provided by Tyr-27, Gly-29, Gly-31, and Asp-48. The active site involves Asp-93.

Belongs to the phospholipase A2 family. Group I subfamily. D49 sub-subfamily. Ca(2+) is required as a cofactor. In terms of tissue distribution, expressed by the venom gland.

The protein localises to the secreted. The catalysed reaction is a 1,2-diacyl-sn-glycero-3-phosphocholine + H2O = a 1-acyl-sn-glycero-3-phosphocholine + a fatty acid + H(+). PLA2 catalyzes the calcium-dependent hydrolysis of the 2-acyl groups in 3-sn-phosphoglycerides. The sequence is that of Basic phospholipase A2 DE-1 from Hemachatus haemachatus (Rinkhals).